The sequence spans 232 residues: RNA chaperone ProQ (232 aa).

The segment at 105–182 is disordered; it reads EAKARVQAQR…REEQHTPVSD (78 aa). Positions 117 to 136 are enriched in basic and acidic residues; sequence QQAKKREAAAAAGEKEDAPR. Positions 137-146 are enriched in basic residues; the sequence is RERKPRPTTP. Residues 147 to 177 show a composition bias toward basic and acidic residues; that stretch reads RRKEGAERKPRAQKPVEKAPKTAKAPREEQH.

It belongs to the ProQ family.

Its subcellular location is the cytoplasm. Its function is as follows. RNA chaperone with significant RNA binding, RNA strand exchange and RNA duplexing activities. May regulate ProP activity through an RNA-based, post-transcriptional mechanism. In Shigella dysenteriae serotype 1 (strain Sd197), this protein is RNA chaperone ProQ.